Reading from the N-terminus, the 400-residue chain is Acetate kinase (400 aa).

Asparagine 7 serves as a coordination point for Mg(2+). An ATP-binding site is contributed by lysine 14. Arginine 91 provides a ligand contact to substrate. Aspartate 148 serves as the catalytic Proton donor/acceptor. Residues 208-212, 284-286, and 332-336 contribute to the ATP site; these read HLGNG, DMR, and GVGEN. Glutamate 384 lines the Mg(2+) pocket.

This sequence belongs to the acetokinase family. As to quaternary structure, homodimer. The cofactor is Mg(2+). Mn(2+) is required as a cofactor.

The protein localises to the cytoplasm. The enzyme catalyses acetate + ATP = acetyl phosphate + ADP. It functions in the pathway metabolic intermediate biosynthesis; acetyl-CoA biosynthesis; acetyl-CoA from acetate: step 1/2. In terms of biological role, catalyzes the formation of acetyl phosphate from acetate and ATP. Can also catalyze the reverse reaction. The polypeptide is Acetate kinase (Coprothermobacter proteolyticus (strain ATCC 35245 / DSM 5265 / OCM 4 / BT)).